A 253-amino-acid polypeptide reads, in one-letter code: NAD-dependent protein deacylase 2 (253 aa).

One can recognise a Deacetylase sirtuin-type domain in the interval 1 to 252; sequence MEDEIRKAAE…VEEVKRLRSE (252 aa). Residues 23-42 and 100-103 each bind NAD(+); these read GAGI…DGLW and QNID. Residue His118 is the Proton acceptor of the active site. The Zn(2+) site is built by Cys126, Cys129, Cys150, and Cys153. Residues 191–193, 217–219, and Ala235 each bind NAD(+); these read GSS and NAE.

It belongs to the sirtuin family. Class III subfamily. It depends on Zn(2+) as a cofactor.

Its subcellular location is the cytoplasm. It catalyses the reaction N(6)-acetyl-L-lysyl-[protein] + NAD(+) + H2O = 2''-O-acetyl-ADP-D-ribose + nicotinamide + L-lysyl-[protein]. In terms of biological role, NAD-dependent protein deacetylase which modulates the activities of several proteins which are inactive in their acetylated form. Deacetylates the N-terminal lysine residue of Alba, the major archaeal chromatin protein and that, in turn, increases Alba's DNA binding affinity, thereby repressing transcription. The protein is NAD-dependent protein deacylase 2 of Archaeoglobus fulgidus (strain ATCC 49558 / DSM 4304 / JCM 9628 / NBRC 100126 / VC-16).